Reading from the N-terminus, the 673-residue chain is Beta-galactosidase GalA (673 aa).

Arg-105 is a binding site for substrate. Cys-109 serves as a coordination point for Zn(2+). Asn-143 is a substrate binding site. Glu-144 functions as the Proton donor in the catalytic mechanism. The Zn(2+) site is built by Cys-149, Cys-151, and Cys-154. Glu-308 serves as the catalytic Nucleophile. Residues Trp-316 and 356-359 (EKFH) contribute to the substrate site.

Belongs to the glycosyl hydrolase 42 family. In terms of assembly, homodimer.

It carries out the reaction Hydrolysis of terminal non-reducing beta-D-galactose residues in beta-D-galactosides.. Inhibited by hydrolysis end products D-galactose and D-glucose. The hydrolysis of o-nitrophenyl-beta-D-galactopyranoside (ONPG) is slightly activated by monovalent ions, Na(+) and K(+). Concentrations of these ions in the range of 1-100 mM exert the stimulating effects. The presence of 1 mM Mn(2+) together with the presence of 10 mM Na(+) slightly stimulates the activity, while presence of 10 mM Mn(2+) inhibits the activity by about 40%. In terms of biological role, catalyzes the hydrolysis of lactose to its constituent monosaccharides glucose and galactose. Possesses a low level of transgalactosylation activity for the production of galacto-oligosaccharides (GOS) from lactose. The polypeptide is Beta-galactosidase GalA (Bacillus licheniformis (strain ATCC 14580 / DSM 13 / JCM 2505 / CCUG 7422 / NBRC 12200 / NCIMB 9375 / NCTC 10341 / NRRL NRS-1264 / Gibson 46)).